A 217-amino-acid chain; its full sequence is Non-structural protein NS3 (217 aa).

This sequence belongs to the orbivirus NS3 family.

Functionally, may play a role in the release of virions from infected cells. In Camelus dromedarius (Dromedary), this protein is Non-structural protein NS3 (Segment-10).